Consider the following 66-residue polypeptide: Beta-mammal toxin Co3 (66 aa).

In terms of domain architecture, LCN-type CS-alpha/beta spans 1–66 (KEGYIVNYYD…VWPLPNKTCN (66 aa)). 4 disulfide bridges follow: Cys12-Cys65, Cys16-Cys41, Cys25-Cys46, and Cys29-Cys48.

As to expression, expressed by the venom gland.

Its subcellular location is the secreted. In terms of biological role, beta toxins bind voltage-independently at site-4 of sodium channels (Nav) and shift the voltage of activation toward more negative potentials thereby affecting sodium channel activation and promoting spontaneous and repetitive firing. This toxin acts on human Nav1.2/SCN2A, Nav1.4/SCN4A and Nav1.6/SCN8A voltage-gated sodium channels. Also, it reduces the peak of sodium currents in Nav1.5/SCN5A at all potentials. In vivo, is lethal to mice when intraperitoneally injected at a dose of 5ug. No activity is observed when injected into crickets or woodlice. The sequence is that of Beta-mammal toxin Co3 from Centruroides ornatus (Scorpion).